The primary structure comprises 562 residues: Serine/threonine-protein kinase STN7, chloroplastic (562 aa).

A chloroplast-targeting transit peptide spans methionine 1–arginine 45. One can recognise a Protein kinase domain in the interval phenylalanine 134–phenylalanine 452. Residues leucine 140–valine 148 and lysine 167 each bind ATP. Catalysis depends on aspartate 279, which acts as the Proton acceptor. The residue at position 526 (serine 526) is a Phosphoserine. Phosphothreonine is present on residues threonine 537 and threonine 541.

This sequence belongs to the protein kinase superfamily. Ser/Thr protein kinase family. Post-translationally, phosphorylated.

Its subcellular location is the plastid. The protein localises to the chloroplast thylakoid membrane. It catalyses the reaction L-seryl-[protein] + ATP = O-phospho-L-seryl-[protein] + ADP + H(+). The catalysed reaction is L-threonyl-[protein] + ATP = O-phospho-L-threonyl-[protein] + ADP + H(+). Functionally, serine/threonine protein kinase required for state transition by phosphorylating light-harvesting complex II outer antennae (LCHII). State transition plays a central role in response to environmental changes and allows to adjust to changing light conditions via the redistribution of light excitation energy between photosystem II (PSII) and photosystem I (PSI). Phosphorylates the minor light harvesting protein LHCB4.2/CP29 and is involved in the light-dependent phosphorylation of TSP9. Acts as a key component of the long-term response (LTR) signaling pathway. Mediates phosphorylation-dependent PTAC16 subcellular localization to regulate plastid gene expression. The protein is Serine/threonine-protein kinase STN7, chloroplastic (STN7) of Arabidopsis thaliana (Mouse-ear cress).